The sequence spans 376 residues: uncharacterized protein (376 aa).

Residues 1 to 280 are Lumenal-facing; the sequence is MPIPIIAHIA…RTPGFRRVVS (280 aa). 6 residues coordinate NADP(+): I66, D115, R178, K233, V270, and T272. K233 acts as the Lowers pKa of active site Tyr in catalysis. Residues 281–301 form a helical membrane-spanning segment; the sequence is FGKVWGLFLYLLLWPFWWLLL. At 302–376 the chain is on the cytoplasmic side; the sequence is KGTIHGAQSF…KKKKIKKSKK (75 aa).

Belongs to the short-chain dehydrogenases/reductases (SDR) family.

The protein localises to the cytoplasm. Its subcellular location is the endoplasmic reticulum membrane. Its function is as follows. May be involved in lipid metabolism. This is an uncharacterized protein from Schizosaccharomyces pombe (strain 972 / ATCC 24843) (Fission yeast).